A 559-amino-acid polypeptide reads, in one-letter code: Potassium-transporting ATPase potassium-binding subunit (559 aa).

A run of 13 helical transmembrane segments spans residues 5-25 (GFLL…PLGS), 27-47 (LARL…RILW), 63-83 (LLAL…LLFW), 132-152 (GLTV…FALI), 170-190 (LVRI…LFFI), 253-273 (LAQM…FGEA), 283-303 (LLWA…WAEV), 327-347 (FGVL…CGAV), 356-376 (ALGG…FGGV), 379-399 (GLYG…LMIG), 416-436 (MTAL…ALAM), 484-504 (LLAF…MAIA), and 524-544 (GALF…LTFI).

It belongs to the KdpA family. In terms of assembly, the system is composed of three essential subunits: KdpA, KdpB and KdpC.

It localises to the cell inner membrane. Part of the high-affinity ATP-driven potassium transport (or Kdp) system, which catalyzes the hydrolysis of ATP coupled with the electrogenic transport of potassium into the cytoplasm. This subunit binds the periplasmic potassium ions and delivers the ions to the membrane domain of KdpB through an intramembrane tunnel. The protein is Potassium-transporting ATPase potassium-binding subunit of Salmonella newport (strain SL254).